Here is a 165-residue protein sequence, read N- to C-terminus: Protein NKG7 (165 aa).

Transmembrane regions (helical) follow at residues 9 to 29 (LFAGSLGLTSSLIALTTDFWI), 61 to 81 (FCILAVLWGLVSVSFLILSCI), 92 to 112 (LVSTVMAFSAALSILVAMAVY), and 133 to 153 (FYLGWVSFILFLFAGCLSLGA).

It belongs to the PMP-22/EMP/MP20 family. As to expression, predominantly expressed by leukocytes with cytotoxic activity such as CD8(+) T-cells and natural killer cells.

The protein resides in the cell membrane. The protein localises to the cytolytic granule membrane. In terms of biological role, regulates cytotoxic granule exocytosis in effector lymphocytes, thus acting as a critical mediator of inflammation in a broad range of infectious and non-infectious diseases. Essential for cytotoxic degranulation of natural killer (NK) cells and CD8(+) T-cells and for the activation of CD4(+) T-cells following infection. Plays a critical role in CD8(+) T-cell and NK cell-mediated cytolysis of target cells and contributes to the cytolytic activity via the perforin/granzyme pathway by enhancing exocytosis of LAMP1-carrying lytic granules. Contributes to NK cell-mediated control of cancer metastasis. This chain is Protein NKG7 (Nkg7), found in Mus musculus (Mouse).